Consider the following 92-residue polypeptide: Small ribosomal subunit protein uS19 (92 aa).

The protein belongs to the universal ribosomal protein uS19 family.

In terms of biological role, protein S19 forms a complex with S13 that binds strongly to the 16S ribosomal RNA. The chain is Small ribosomal subunit protein uS19 from Polaromonas sp. (strain JS666 / ATCC BAA-500).